The primary structure comprises 565 residues: Oxygen-dependent choline dehydrogenase (565 aa).

An FAD-binding site is contributed by 6–35 (DYIIVGAGSAGNTLATRLTEDAGVTVLLLE). Catalysis depends on H475, which acts as the Proton acceptor.

This sequence belongs to the GMC oxidoreductase family. FAD serves as cofactor.

It carries out the reaction choline + A = betaine aldehyde + AH2. The catalysed reaction is betaine aldehyde + NAD(+) + H2O = glycine betaine + NADH + 2 H(+). It participates in amine and polyamine biosynthesis; betaine biosynthesis via choline pathway; betaine aldehyde from choline (cytochrome c reductase route): step 1/1. In terms of biological role, involved in the biosynthesis of the osmoprotectant glycine betaine. Catalyzes the oxidation of choline to betaine aldehyde and betaine aldehyde to glycine betaine at the same rate. The protein is Oxygen-dependent choline dehydrogenase of Pseudomonas putida (strain ATCC 700007 / DSM 6899 / JCM 31910 / BCRC 17059 / LMG 24140 / F1).